The following is a 430-amino-acid chain: Adenylosuccinate synthetase (430 aa).

Residues 12 to 18 (GDEGKGK) and 40 to 42 (GHT) contribute to the GTP site. Asp-13 (proton acceptor) is an active-site residue. Mg(2+)-binding residues include Asp-13 and Gly-40. IMP contacts are provided by residues 13-16 (DEGK), 38-41 (NAGH), Thr-128, Arg-142, Gln-223, Thr-238, and Arg-302. His-41 acts as the Proton donor in catalysis. 298–304 (TTTGRPR) serves as a coordination point for substrate. Residues Arg-304, 330 to 332 (LLD), and 412 to 414 (SVG) each bind GTP.

This sequence belongs to the adenylosuccinate synthetase family. As to quaternary structure, homodimer. It depends on Mg(2+) as a cofactor.

The protein localises to the cytoplasm. It carries out the reaction IMP + L-aspartate + GTP = N(6)-(1,2-dicarboxyethyl)-AMP + GDP + phosphate + 2 H(+). It functions in the pathway purine metabolism; AMP biosynthesis via de novo pathway; AMP from IMP: step 1/2. Plays an important role in the de novo pathway of purine nucleotide biosynthesis. Catalyzes the first committed step in the biosynthesis of AMP from IMP. The protein is Adenylosuccinate synthetase of Listeria monocytogenes serotype 4a (strain HCC23).